The chain runs to 298 residues: Oxygen-dependent coproporphyrinogen-III oxidase (298 aa).

Ser92 lines the substrate pocket. Positions 96 and 106 each coordinate a divalent metal cation. His106 (proton donor) is an active-site residue. Substrate is bound at residue 108-110 (NVR). The a divalent metal cation site is built by His145 and His175. The important for dimerization stretch occupies residues 239 to 274 (YVEFNLVYDRGTLFGLQSGGRSESILMSLPPRVRWE). 257 to 259 (GGR) is a substrate binding site.

This sequence belongs to the aerobic coproporphyrinogen-III oxidase family. As to quaternary structure, homodimer. A divalent metal cation serves as cofactor.

It is found in the cytoplasm. It catalyses the reaction coproporphyrinogen III + O2 + 2 H(+) = protoporphyrinogen IX + 2 CO2 + 2 H2O. The protein operates within porphyrin-containing compound metabolism; protoporphyrin-IX biosynthesis; protoporphyrinogen-IX from coproporphyrinogen-III (O2 route): step 1/1. Its function is as follows. Involved in the heme biosynthesis. Catalyzes the aerobic oxidative decarboxylation of propionate groups of rings A and B of coproporphyrinogen-III to yield the vinyl groups in protoporphyrinogen-IX. The chain is Oxygen-dependent coproporphyrinogen-III oxidase from Stenotrophomonas maltophilia (strain R551-3).